Consider the following 260-residue polypeptide: Pyridoxine 5'-phosphate synthase (260 aa).

Residues Asn-10 and Arg-21 each contribute to the 3-amino-2-oxopropyl phosphate site. Catalysis depends on His-46, which acts as the Proton acceptor. Positions 48 and 53 each coordinate 1-deoxy-D-xylulose 5-phosphate. Glu-76 acts as the Proton acceptor in catalysis. Thr-113 lines the 1-deoxy-D-xylulose 5-phosphate pocket. The active-site Proton donor is His-204. 3-amino-2-oxopropyl phosphate contacts are provided by residues Asp-205 and Gly-227–His-228.

It belongs to the PNP synthase family. In terms of assembly, homooctamer; tetramer of dimers.

The protein localises to the cytoplasm. It carries out the reaction 3-amino-2-oxopropyl phosphate + 1-deoxy-D-xylulose 5-phosphate = pyridoxine 5'-phosphate + phosphate + 2 H2O + H(+). The protein operates within cofactor biosynthesis; pyridoxine 5'-phosphate biosynthesis; pyridoxine 5'-phosphate from D-erythrose 4-phosphate: step 5/5. Its function is as follows. Catalyzes the complicated ring closure reaction between the two acyclic compounds 1-deoxy-D-xylulose-5-phosphate (DXP) and 3-amino-2-oxopropyl phosphate (1-amino-acetone-3-phosphate or AAP) to form pyridoxine 5'-phosphate (PNP) and inorganic phosphate. This is Pyridoxine 5'-phosphate synthase from Xylella fastidiosa (strain M12).